A 344-amino-acid chain; its full sequence is Biotin synthase (344 aa).

The 228-residue stretch at 40–267 (AQVQVSTLLS…KSMVRLSAGR (228 aa)) folds into the Radical SAM core domain. Positions 55, 59, and 62 each coordinate [4Fe-4S] cluster. Cysteine 99, cysteine 130, cysteine 190, and arginine 262 together coordinate [2Fe-2S] cluster.

It belongs to the radical SAM superfamily. Biotin synthase family. Homodimer. [4Fe-4S] cluster is required as a cofactor. Requires [2Fe-2S] cluster as cofactor.

The enzyme catalyses (4R,5S)-dethiobiotin + (sulfur carrier)-SH + 2 reduced [2Fe-2S]-[ferredoxin] + 2 S-adenosyl-L-methionine = (sulfur carrier)-H + biotin + 2 5'-deoxyadenosine + 2 L-methionine + 2 oxidized [2Fe-2S]-[ferredoxin]. It participates in cofactor biosynthesis; biotin biosynthesis; biotin from 7,8-diaminononanoate: step 2/2. Catalyzes the conversion of dethiobiotin (DTB) to biotin by the insertion of a sulfur atom into dethiobiotin via a radical-based mechanism. This Xanthomonas axonopodis pv. citri (strain 306) protein is Biotin synthase.